We begin with the raw amino-acid sequence, 31 residues long: Dermaseptin-7.1TR (31 aa).

A Glutamine amide modification is found at Gln31.

As to expression, expressed by the skin glands.

It is found in the secreted. Its function is as follows. Has antimicrobial activity. In Phyllomedusa trinitatis (Trinidad leaf frog), this protein is Dermaseptin-7.1TR.